Consider the following 85-residue polypeptide: Small ribosomal subunit protein uS17 (85 aa).

It belongs to the universal ribosomal protein uS17 family. Part of the 30S ribosomal subunit.

In terms of biological role, one of the primary rRNA binding proteins, it binds specifically to the 5'-end of 16S ribosomal RNA. The chain is Small ribosomal subunit protein uS17 from Acinetobacter baumannii (strain AB307-0294).